The sequence spans 468 residues: RUS family member 1 (468 aa).

Alanine 2 carries the post-translational modification N-acetylalanine. Phosphothreonine is present on threonine 49. The helical transmembrane segment at 247–267 (LLMLPLVSGCPGFSLGCFFFL) threads the bilayer.

The protein belongs to the RUS1 family.

Its subcellular location is the membrane. The chain is RUS family member 1 (Rusf1) from Pongo abelii (Sumatran orangutan).